A 379-amino-acid polypeptide reads, in one-letter code: Homoserine O-succinyltransferase (379 aa).

The 310-residue stretch at 48 to 357 (NAVLICHALS…SAHGHDAFLM (310 aa)) folds into the AB hydrolase-1 domain. Residue Ser154 is the Nucleophile of the active site. Arg224 is a binding site for substrate. Catalysis depends on residues Asp319 and His352. Asp353 lines the substrate pocket.

Belongs to the AB hydrolase superfamily. MetX family. As to quaternary structure, homodimer.

The protein localises to the cytoplasm. The catalysed reaction is L-homoserine + succinyl-CoA = O-succinyl-L-homoserine + CoA. It participates in amino-acid biosynthesis; L-methionine biosynthesis via de novo pathway; O-succinyl-L-homoserine from L-homoserine: step 1/1. Transfers a succinyl group from succinyl-CoA to L-homoserine, forming succinyl-L-homoserine. In Neisseria meningitidis serogroup B (strain ATCC BAA-335 / MC58), this protein is Homoserine O-succinyltransferase.